Reading from the N-terminus, the 169-residue chain is Large ribosomal subunit protein uL5 (169 aa).

It belongs to the universal ribosomal protein uL5 family. Part of the 50S ribosomal subunit; contacts the 5S rRNA and probably tRNA. Forms a bridge to the 30S subunit in the 70S ribosome.

Its function is as follows. This is one of the proteins that bind and probably mediate the attachment of the 5S RNA into the large ribosomal subunit, where it forms part of the central protuberance. In the 70S ribosome it contacts protein S13 of the 30S subunit (bridge B1b), connecting the 2 subunits; this bridge is implicated in subunit movement. May contact the P site tRNA; the 5S rRNA and some of its associated proteins might help stabilize positioning of ribosome-bound tRNAs. In Methanosarcina mazei (strain ATCC BAA-159 / DSM 3647 / Goe1 / Go1 / JCM 11833 / OCM 88) (Methanosarcina frisia), this protein is Large ribosomal subunit protein uL5.